The primary structure comprises 253 residues: Probable transcriptional regulatory protein RPR_05505 (253 aa).

The protein belongs to the TACO1 family.

It is found in the cytoplasm. This is Probable transcriptional regulatory protein RPR_05505 from Rickettsia peacockii (strain Rustic).